Here is a 961-residue protein sequence, read N- to C-terminus: DNA repair endonuclease XPF (961 aa).

Disordered regions lie at residues 1–27, 451–485, and 674–693; these read MADS…SADT, NYAK…PPLA, and PTDE…QATK. Residues 13–22 show a composition bias toward basic and acidic residues; sequence TENERPKEVE. A compositionally biased stretch (polar residues) spans 458-469; sequence TRSAPPKNVSSN. The 81-residue stretch at 697–777 folds into the ERCC4 domain; that stretch reads KVIVDMREFR…KPILLIEFDQ (81 aa).

This sequence belongs to the XPF family. As to quaternary structure, heterodimer. Interacts with hdm.

It is found in the nucleus. In terms of biological role, implicated in recombination events during meiosis, mostly in meiotic exchange. May directly resolve Holliday junctions within recombination intermediates leading to DNA exchange. Also required for the repair of mismatches within meiotic heteroduplex DNA and for nucleotide excision repair. The sequence is that of DNA repair endonuclease XPF (mei-9) from Drosophila melanogaster (Fruit fly).